Consider the following 571-residue polypeptide: CDT1-like protein a, chloroplastic (571 aa).

The transit peptide at 1–79 (MSTPGSSRSI…GSRRRSEDPV (79 aa)) directs the protein to the chloroplast. 2 disordered regions span residues 1–110 (MSTP…EKEK) and 288–315 (TTSSLAKPTSSQINIAPTPTKPTSTPAK). Polar residues predominate over residues 22–38 (SPSSKSQTGNPNPSSVA). The segment covering 81–96 (SSAKSRLFFDSSSSSP) has biased composition (low complexity). The segment covering 288-302 (TTSSLAKPTSSQINI) has biased composition (polar residues). Low complexity predominate over residues 303–315 (APTPTKPTSTPAK).

Belongs to the Cdt1 family. Binds to ARC6. In terms of processing, phosphorylated by cyclin D- and cyclin A-containing CDKA-1, and thus targeted to proteasome-mediated proteolysis. As to expression, expressed in proliferating (e.g. shoot and root apical meristems, organ primordia) and endoreplicating cells (e.g. guard cells and stomatal lineage, developing trichomes).

It localises to the plastid. Its subcellular location is the chloroplast. In terms of biological role, member of the pre-replication complex. Component of the plastid division machinery. Promotes polyloidization and regulates endoreduplication. Involved in the coordination of cell and plastid division. This is CDT1-like protein a, chloroplastic (CDT1A) from Arabidopsis thaliana (Mouse-ear cress).